We begin with the raw amino-acid sequence, 61 residues long: Large ribosomal subunit protein uL30 (61 aa).

It belongs to the universal ribosomal protein uL30 family. In terms of assembly, part of the 50S ribosomal subunit.

The polypeptide is Large ribosomal subunit protein uL30 (Teredinibacter turnerae (strain ATCC 39867 / T7901)).